The chain runs to 1551 residues: UDP-glucose:glycoprotein glucosyltransferase 1 (1551 aa).

The signal sequence occupies residues Met-1–Ala-42. N-linked (GlcNAc...) asparagine glycans are attached at residues Asn-269, Asn-536, and Asn-1228. Positions Lys-1244–Leu-1551 are glucosyltransferase. At Ser-1277 the chain carries Phosphoserine. The tract at residues Lys-1531 to Leu-1551 is disordered. The Prevents secretion from ER signature appears at His-1548 to Leu-1551.

This sequence belongs to the glycosyltransferase 8 family. Monomer as well as in a tight complex with SELENOF. Interacts with METTL23. Part of a large chaperone multiprotein complex comprising DNAJB11, HSP90B1, HSPA5, HYOU, PDIA2, PDIA4, PDIA6, PPIB, SDF2L1, UGGT1 and very small amounts of ERP29, but not, or at very low levels, CALR nor CANX. Ca(2+) is required as a cofactor. The cofactor is Mn(2+).

The protein localises to the endoplasmic reticulum lumen. The protein resides in the endoplasmic reticulum-Golgi intermediate compartment. The catalysed reaction is N(4)-(alpha-D-Man-(1-&gt;2)-alpha-D-Man-(1-&gt;2)-alpha-D-Man-(1-&gt;3)-[alpha-D-Man-(1-&gt;2)-alpha-D-Man-(1-&gt;3)-[alpha-D-Man-(1-&gt;2)-alpha-D-Man-(1-&gt;6)]-alpha-D-Man-(1-&gt;6)]-beta-D-Man-(1-&gt;4)-beta-D-GlcNAc-(1-&gt;4)-beta-D-GlcNAc)-L-asparaginyl-[protein] (N-glucan mannose isomer 9A1,2,3B1,2,3) + UDP-alpha-D-glucose = N(4)-(alpha-D-Glc-(1-&gt;3)-alpha-D-Man-(1-&gt;2)-alpha-D-Man-(1-&gt;2)-alpha-D-Man-(1-&gt;3)-[alpha-D-Man-(1-&gt;2)-alpha-D-Man-(1-&gt;3)-[alpha-D-Man-(1-&gt;2)-alpha-D-Man-(1-&gt;6)]-alpha-D-Man-(1-&gt;6)]-beta-D-Man-(1-&gt;4)-beta-D-GlcNAc-(1-&gt;4)-beta-D-GlcNAc)-L-asparaginyl-[protein] + UDP + H(+). Its pathway is protein modification; protein glycosylation. Recognizes glycoproteins with minor folding defects. Reglucosylates single N-glycans near the misfolded part of the protein, thus providing quality control for protein folding in the endoplasmic reticulum. Reglucosylated proteins are recognized by calreticulin for recycling to the endoplasmic reticulum and refolding or degradation. This chain is UDP-glucose:glycoprotein glucosyltransferase 1 (Uggt1), found in Mus musculus (Mouse).